Reading from the N-terminus, the 384-residue chain is MLRYLSAGESHGKGLIAIIEGLPSNIPMDINRINADLGRRQQGFGRGNRMKIEKDRVEILSGVRDGKTLGTPLTLMIENLDYKNWTSIMSVEKLEKQNIIVEPRPGHGDLVGSLKYNHKDIRNVIERTSARDTAIRTAIGAVVKQFLSIFDIEILSHVISIGRAHYVPFVEDLFQYKSQIEASPVRCLNPTIEERMMGEIQRAKETGDSLGGVFEVIVRNVPIGIGSYAHFDRKLDGILAQGLMSLQAIKAVEIGNGIEGSSKMGSQFHDEIKYSEAKGYYHDTNRAGGIEAGVSNGEDILIRGYMKPIPTLMKPLKTVDMGTKEVKEAIIERSDNCAVPSAAVVAEGICAFAIAKEFLEKFRGDSIEEVEWNYERYMNYLRSR.

NADP(+) is bound by residues arginine 40 and arginine 46. Residues 127–129, 247–248, alanine 292, 307–311, and arginine 333 contribute to the FMN site; these read RTS, QA, and KPIPT.

Belongs to the chorismate synthase family. As to quaternary structure, homotetramer. The cofactor is FMNH2.

The catalysed reaction is 5-O-(1-carboxyvinyl)-3-phosphoshikimate = chorismate + phosphate. The protein operates within metabolic intermediate biosynthesis; chorismate biosynthesis; chorismate from D-erythrose 4-phosphate and phosphoenolpyruvate: step 7/7. Functionally, catalyzes the anti-1,4-elimination of the C-3 phosphate and the C-6 proR hydrogen from 5-enolpyruvylshikimate-3-phosphate (EPSP) to yield chorismate, which is the branch point compound that serves as the starting substrate for the three terminal pathways of aromatic amino acid biosynthesis. This reaction introduces a second double bond into the aromatic ring system. The chain is Chorismate synthase from Alkaliphilus oremlandii (strain OhILAs) (Clostridium oremlandii (strain OhILAs)).